The chain runs to 188 residues: MNGDDAFVRRPRVGSQIPEKMQKAFDDIAKYFSEKEWEKMKASEKIIYVYMKRKYEAMTKLGFKATLPPFMRNKRVADFQGNDFDNDPNRGNQVEHPQMTFGRLQGIFPKITPEKPAEEGNDSKGVPEASGPQNNGKQLRPSGKLNTSEKVNKTSGPKRGKHAWTHRVRERKQLVIYEEISDPQEDDE.

A KRAB-related domain is found at 20 to 83; the sequence is KMQKAFDDIA…KRVADFQGND (64 aa). Residues 78 to 188 are disordered; it reads DFQGNDFDND…EISDPQEDDE (111 aa). Residues 112–122 are compositionally biased toward basic and acidic residues; that stretch reads TPEKPAEEGND. Positions 144 to 155 are enriched in polar residues; the sequence is KLNTSEKVNKTS. Over residues 156–170 the composition is skewed to basic residues; it reads GPKRGKHAWTHRVRE. Residues 179-188 show a composition bias toward acidic residues; the sequence is EISDPQEDDE.

The protein belongs to the SSX family.

Its function is as follows. Could act as a modulator of transcription. This Homo sapiens (Human) protein is Protein SSX5 (SSX5).